We begin with the raw amino-acid sequence, 254 residues long: Ferritin, chloroplastic (254 aa).

A chloroplast-targeting transit peptide spans 1–48; that stretch reads MALAPSKVSPFSGFSLSDGVGAVRNPTCSVSLSFLNKKVGSRNLGVSA. Residues 49–81 form an extension peptide (EP) region; it reads STVPLTGVIFEPFEEVKKEELAVPTAGQVSLAR. In terms of domain architecture, Ferritin-like diiron spans 82 to 235; sequence QYYADECESA…EYVAQLRMVG (154 aa). Fe cation contacts are provided by glutamate 99, glutamate 134, histidine 137, glutamate 183, and glutamine 217.

The protein belongs to the ferritin family. In terms of assembly, oligomer of 24 subunits. There are two types of subunits: L (light) chain and H (heavy) chain. The major chain can be light or heavy, depending on the species and tissue type. The functional molecule forms a roughly spherical shell with a diameter of 12 nm and contains a central cavity into which the insoluble mineral iron core is deposited.

Its subcellular location is the plastid. It localises to the chloroplast. The catalysed reaction is 4 Fe(2+) + O2 + 4 H(+) = 4 Fe(3+) + 2 H2O. In terms of biological role, stores iron in a soluble, non-toxic, readily available form. Important for iron homeostasis. Has ferroxidase activity. Iron is taken up in the ferrous form and deposited as ferric hydroxides after oxidation. The chain is Ferritin, chloroplastic (PFE) from Phaseolus vulgaris (Kidney bean).